Here is a 408-residue protein sequence, read N- to C-terminus: GTPase HflX (408 aa).

A Hflx-type G domain is found at 198-361; the sequence is PRVSLVGYTN…LIVREMERHY (164 aa). Residues 204 to 211, 229 to 233, 251 to 254, 317 to 320, and 339 to 341 each bind GTP; these read GYTNAGKS, FVTLD, DTVG, NKAD, and SAK. Residues S211 and T231 each contribute to the Mg(2+) site.

This sequence belongs to the TRAFAC class OBG-HflX-like GTPase superfamily. HflX GTPase family. In terms of assembly, monomer. Associates with the 50S ribosomal subunit. The cofactor is Mg(2+).

The protein resides in the cytoplasm. Functionally, GTPase that associates with the 50S ribosomal subunit and may have a role during protein synthesis or ribosome biogenesis. The sequence is that of GTPase HflX from Spirochaeta thermophila (strain ATCC 49972 / DSM 6192 / RI 19.B1).